The chain runs to 331 residues: Cytosolic sulfotransferase 1 (331 aa).

74–79 lines the 3'-phosphoadenylyl sulfate pocket; the sequence is KSGTTW. The Proton acceptor role is filled by histidine 143. 3'-phosphoadenylyl sulfate is bound by residues arginine 165, serine 173, tyrosine 231, and 297 to 299; that span reads RKG.

It belongs to the sulfotransferase 1 family.

Its subcellular location is the cytoplasm. Its function is as follows. Sulfotransferase that utilizes 3'-phospho-5'-adenylyl sulfate (PAPS) as sulfonate donor. In Arabidopsis thaliana (Mouse-ear cress), this protein is Cytosolic sulfotransferase 1 (SOT1).